A 129-amino-acid chain; its full sequence is Trefoil factor 2 (129 aa).

The signal sequence occupies residues 1 to 23; it reads MGPRGAPLLVVVLVLGLHALAEG. P-type domains follow at residues 29–73 and 79–122; these read CRCS…FHPL and EQCV…FFPQ. Cystine bridges form between Cys-29-Cys-127, Cys-31-Cys-58, Cys-42-Cys-57, Cys-52-Cys-69, Cys-81-Cys-107, Cys-91-Cys-106, and Cys-101-Cys-118.

In terms of tissue distribution, expressed in the digestive tract, where it was found predominantly in the stomach with highest expression in the antrum. It is secreted predominantly from antral mucous cells into the lumen of the gastrointestinal tract.

Its subcellular location is the secreted. Functionally, inhibits gastrointestinal motility and gastric acid secretion. Could function as a structural component of gastric mucus, possibly by stabilizing glycoproteins in the mucus gel through interactions with carbohydrate side chains. The sequence is that of Trefoil factor 2 (Tff2) from Rattus norvegicus (Rat).